The chain runs to 670 residues: Tripeptidyl-peptidase SED1 (670 aa).

The signal sequence occupies residues 1–20 (MSTMIFMYFIYIVLYASGIA). Positions 21–231 (ANLSYHVHEK…VGLLKNKILS (211 aa)) are cleaved as a propeptide — removed in mature form. Residues 241–669 (LITPDCLRAL…DRMLDLFLQL (429 aa)) form the Peptidase S53 domain. Active-site charge relay system residues include Glu-318 and Asp-322. Residues Asn-334, Asn-387, Asn-488, Asn-508, and Asn-551 are each glycosylated (N-linked (GlcNAc...) asparagine). Ser-586 (charge relay system) is an active-site residue. Asp-627, Val-628, Gly-647, and Asp-649 together coordinate Ca(2+).

Requires Ca(2+) as cofactor.

The protein localises to the secreted. The protein resides in the extracellular space. It carries out the reaction Release of an N-terminal tripeptide from a polypeptide.. Its function is as follows. Secreted tripeptidyl-peptidase which degrades proteins at acidic pHs and is involved in virulence. This chain is Tripeptidyl-peptidase SED1 (SED1), found in Arthroderma otae (strain ATCC MYA-4605 / CBS 113480) (Microsporum canis).